The primary structure comprises 404 residues: 4-hydroxy-3-methylbut-2-en-1-yl diphosphate synthase (ferredoxin) (404 aa).

Positions 313, 316, 347, and 354 each coordinate [4Fe-4S] cluster.

The protein belongs to the IspG family. [4Fe-4S] cluster serves as cofactor.

The enzyme catalyses (2E)-4-hydroxy-3-methylbut-2-enyl diphosphate + 2 oxidized [2Fe-2S]-[ferredoxin] + H2O = 2-C-methyl-D-erythritol 2,4-cyclic diphosphate + 2 reduced [2Fe-2S]-[ferredoxin] + H(+). It participates in isoprenoid biosynthesis; isopentenyl diphosphate biosynthesis via DXP pathway; isopentenyl diphosphate from 1-deoxy-D-xylulose 5-phosphate: step 5/6. In terms of biological role, converts 2C-methyl-D-erythritol 2,4-cyclodiphosphate (ME-2,4cPP) into 1-hydroxy-2-methyl-2-(E)-butenyl 4-diphosphate. The polypeptide is 4-hydroxy-3-methylbut-2-en-1-yl diphosphate synthase (ferredoxin) (Crocosphaera subtropica (strain ATCC 51142 / BH68) (Cyanothece sp. (strain ATCC 51142))).